Reading from the N-terminus, the 292-residue chain is Protein CHLOROPLAST ENHANCING STRESS TOLERANCE, chloroplastic (292 aa).

Positions 1–15 (MALLSPPSPPPPLPP) are enriched in pro residues. The transit peptide at 1-67 (MALLSPPSPP…RSSRRRRRVA (67 aa)) directs the protein to the chloroplast. 2 disordered regions span residues 1–119 (MALL…DLED) and 206–225 (MEAPKKKSKPGKSVYAKATD). Low complexity-rich tracts occupy residues 49-58 (STANARAYSR) and 94-107 (ASSDGAAGDIASSA). The helical transmembrane segment at 267 to 287 (ALYLLTAFPVIIGISVVLILF) threads the bilayer.

Belongs to the Y3IP1/CEST family.

It localises to the plastid. It is found in the chloroplast thylakoid membrane. Its function is as follows. Involved in light-induced chloroplast development and growth. Involved in the plant response to abiotic and photooxidative stresses. May be involved in the suppression of photooxidative damage. The chain is Protein CHLOROPLAST ENHANCING STRESS TOLERANCE, chloroplastic from Oryza sativa subsp. indica (Rice).